We begin with the raw amino-acid sequence, 188 residues long: dCTP deaminase (188 aa).

Residues 111 to 116 (KSTYAR), 135 to 137 (TLE), Gln-156, Tyr-170, and Gln-180 each bind dCTP. The active-site Proton donor/acceptor is Glu-137.

Belongs to the dCTP deaminase family. As to quaternary structure, homotrimer.

The enzyme catalyses dCTP + H2O + H(+) = dUTP + NH4(+). It participates in pyrimidine metabolism; dUMP biosynthesis; dUMP from dCTP (dUTP route): step 1/2. Functionally, catalyzes the deamination of dCTP to dUTP. The chain is dCTP deaminase from Herminiimonas arsenicoxydans.